Consider the following 780-residue polypeptide: Heat shock protein 90-5, chloroplastic (780 aa).

The transit peptide at 1–60 directs the protein to the chloroplast; sequence MAPALSRSLYTSPLTSVPITPVSSRLSHLRSSFLPHGGALRTGVSCSWNLEKRCNRFAVK. Residues E106, N110, D152, M157, 172 to 173, 196 to 201, T251, and R441 contribute to the ATP site; these read SG and QFGVGF. Positions 742–780 are disordered; it reads GRVEEEEESSTVNEGDDKSGETEVVEPSEVRAESDPWQD. Residues 769–780 are compositionally biased toward basic and acidic residues; it reads SEVRAESDPWQD.

This sequence belongs to the heat shock protein 90 family. Homodimer. Interacts with VIPP1. Interacts with P23-1. As to expression, expressed in roots, cotyledons, young leaves, mature leaves, stems, flowers, petals and siliques.

The protein localises to the plastid. It localises to the chloroplast stroma. Its function is as follows. Molecular chaperone required for chloroplast biogenesis. Essential for chloroplast biogenesis and maintenance, and thus for embryogenesis. May be involved in the disassembly of VIPP1 for thylakoid membrane formation and/or maintenance. Cooperates with TIC components and other molecular chaperones to drive transport of preproteins into chloroplasts and functions in the chloroplast stroma to facilitate membrane translocation during protein import into the organelle. This chain is Heat shock protein 90-5, chloroplastic, found in Arabidopsis thaliana (Mouse-ear cress).